Consider the following 168-residue polypeptide: Crossover junction endodeoxyribonuclease RuvC (168 aa).

Catalysis depends on residues Asp-9, Glu-70, and Asp-145. Mg(2+)-binding residues include Asp-9, Glu-70, and Asp-145.

The protein belongs to the RuvC family. Homodimer which binds Holliday junction (HJ) DNA. The HJ becomes 2-fold symmetrical on binding to RuvC with unstacked arms; it has a different conformation from HJ DNA in complex with RuvA. In the full resolvosome a probable DNA-RuvA(4)-RuvB(12)-RuvC(2) complex forms which resolves the HJ. Requires Mg(2+) as cofactor.

The protein resides in the cytoplasm. The enzyme catalyses Endonucleolytic cleavage at a junction such as a reciprocal single-stranded crossover between two homologous DNA duplexes (Holliday junction).. Its function is as follows. The RuvA-RuvB-RuvC complex processes Holliday junction (HJ) DNA during genetic recombination and DNA repair. Endonuclease that resolves HJ intermediates. Cleaves cruciform DNA by making single-stranded nicks across the HJ at symmetrical positions within the homologous arms, yielding a 5'-phosphate and a 3'-hydroxyl group; requires a central core of homology in the junction. The consensus cleavage sequence is 5'-(A/T)TT(C/G)-3'. Cleavage occurs on the 3'-side of the TT dinucleotide at the point of strand exchange. HJ branch migration catalyzed by RuvA-RuvB allows RuvC to scan DNA until it finds its consensus sequence, where it cleaves and resolves the cruciform DNA. This chain is Crossover junction endodeoxyribonuclease RuvC, found in Chlamydia caviae (strain ATCC VR-813 / DSM 19441 / 03DC25 / GPIC) (Chlamydophila caviae).